The chain runs to 74 residues: DNA-directed RNA polymerase subunit omega (74 aa).

It belongs to the RNA polymerase subunit omega family. In terms of assembly, the RNAP catalytic core consists of 2 alpha, 1 beta, 1 beta' and 1 omega subunit. When a sigma factor is associated with the core the holoenzyme is formed, which can initiate transcription.

It carries out the reaction RNA(n) + a ribonucleoside 5'-triphosphate = RNA(n+1) + diphosphate. Promotes RNA polymerase assembly. Latches the N- and C-terminal regions of the beta' subunit thereby facilitating its interaction with the beta and alpha subunits. The polypeptide is DNA-directed RNA polymerase subunit omega (Helicobacter pylori (strain Shi470)).